Here is a 289-residue protein sequence, read N- to C-terminus: uncharacterized protein (289 aa).

Residues 25-66 (GGSGDSQSAHTPSTSIHTQNNSTPNKNTSTPPVNVSNANNLE) are disordered. The segment covering 33-43 (AHTPSTSIHTQ) has biased composition (polar residues). The span at 44 to 59 (NNSTPNKNTSTPPVNV) shows a compositional bias: low complexity.

This is an uncharacterized protein from Haemophilus influenzae (strain ATCC 51907 / DSM 11121 / KW20 / Rd).